Consider the following 243-residue polypeptide: Eukaryotic translation initiation factor 4E-2 (243 aa).

Belongs to the eukaryotic initiation factor 4E family. In terms of assembly, eIF4F is a multi-subunit complex, the composition of which varies with external and internal environmental conditions. It is composed of at least eIF4A, eIF4E and eIF4G. eIF4E is also known to interact with other partners.

Functionally, recognizes and binds the 7-methylguanosine-containing mRNA cap during an early step in the initiation of protein synthesis and facilitates ribosome binding by inducing the unwinding of the mRNAs secondary structures. In Schizosaccharomyces pombe (strain 972 / ATCC 24843) (Fission yeast), this protein is Eukaryotic translation initiation factor 4E-2 (tif452).